The following is a 341-amino-acid chain: Anthranilate phosphoribosyltransferase (341 aa).

Residues Gly-80, 83 to 84, Thr-88, 90 to 93, 108 to 116, and Ser-120 contribute to the 5-phospho-alpha-D-ribose 1-diphosphate site; these read GD, NIST, and KHGNYSVSS. An anthranilate-binding site is contributed by Gly-80. A Mg(2+)-binding site is contributed by Ser-92. Asn-111 contributes to the anthranilate binding site. Arg-166 contacts anthranilate. Residues Asp-224 and Glu-225 each contribute to the Mg(2+) site.

The protein belongs to the anthranilate phosphoribosyltransferase family. As to quaternary structure, homodimer. Mg(2+) is required as a cofactor.

It carries out the reaction N-(5-phospho-beta-D-ribosyl)anthranilate + diphosphate = 5-phospho-alpha-D-ribose 1-diphosphate + anthranilate. It functions in the pathway amino-acid biosynthesis; L-tryptophan biosynthesis; L-tryptophan from chorismate: step 2/5. In terms of biological role, catalyzes the transfer of the phosphoribosyl group of 5-phosphorylribose-1-pyrophosphate (PRPP) to anthranilate to yield N-(5'-phosphoribosyl)-anthranilate (PRA). The polypeptide is Anthranilate phosphoribosyltransferase (Haloquadratum walsbyi (strain DSM 16790 / HBSQ001)).